A 575-amino-acid chain; its full sequence is Arginine--tRNA ligase (575 aa).

The 'HIGH' region signature appears at 136–146 (ANPTGPLHVGH).

This sequence belongs to the class-I aminoacyl-tRNA synthetase family. Monomer.

It is found in the cytoplasm. It carries out the reaction tRNA(Arg) + L-arginine + ATP = L-arginyl-tRNA(Arg) + AMP + diphosphate. The chain is Arginine--tRNA ligase from Polynucleobacter necessarius subsp. necessarius (strain STIR1).